The primary structure comprises 398 residues: Arylacetamide deacetylase (398 aa).

Residues 1 to 5 (MGKTI) lie on the Cytoplasmic side of the membrane. Residues 6 to 26 (SLLISVVLVAYYLYIPLPDAI) traverse the membrane as a helical; Signal-anchor for type II membrane protein segment. Topologically, residues 27-398 (EEPWKVVWET…QYLSWLIKNL (372 aa)) are lumenal. The short motif at 110–112 (HGG) is the Involved in the stabilization of the negatively charged intermediate by the formation of the oxyanion hole element. Residues Cys115 and Cys339 are joined by a disulfide bond. Ser188 is a catalytic residue. Residue Asn281 is glycosylated (N-linked (GlcNAc...) asparagine). Active-site residues include Asp342 and His372.

The protein belongs to the 'GDXG' lipolytic enzyme family. In terms of processing, N-glycosylated. Highest levels in liver with lower levels in jejunum and kidney.

Its subcellular location is the endoplasmic reticulum membrane. It localises to the microsome membrane. It catalyses the reaction a triacylglycerol + H2O = a diacylglycerol + a fatty acid + H(+). Functionally, displays cellular triglyceride lipase activity in liver, increases the levels of intracellular fatty acids derived from the hydrolysis of newly formed triglyceride stores and plays a role in very low-density lipoprotein assembly. Displays serine esterase activity in liver. Deacetylates a variety of arylacetamide substrates, including xenobiotic compounds and procarcinogens, converting them to the primary arylamide compounds and increasing their toxicity. In Mus musculus (Mouse), this protein is Arylacetamide deacetylase (Aadac).